The primary structure comprises 275 residues: Large ribosomal subunit protein uL2 (275 aa).

The tract at residues alanine 223 to glycine 275 is disordered.

This sequence belongs to the universal ribosomal protein uL2 family. In terms of assembly, part of the 50S ribosomal subunit. Forms a bridge to the 30S subunit in the 70S ribosome.

Functionally, one of the primary rRNA binding proteins. Required for association of the 30S and 50S subunits to form the 70S ribosome, for tRNA binding and peptide bond formation. It has been suggested to have peptidyltransferase activity; this is somewhat controversial. Makes several contacts with the 16S rRNA in the 70S ribosome. This is Large ribosomal subunit protein uL2 from Xanthomonas campestris pv. campestris (strain 8004).